Reading from the N-terminus, the 141-residue chain is Large ribosomal subunit protein uL16 (141 aa).

It belongs to the universal ribosomal protein uL16 family. Part of the 50S ribosomal subunit.

Functionally, binds 23S rRNA and is also seen to make contacts with the A and possibly P site tRNAs. The polypeptide is Large ribosomal subunit protein uL16 (Campylobacter hominis (strain ATCC BAA-381 / DSM 21671 / CCUG 45161 / LMG 19568 / NCTC 13146 / CH001A)).